The chain runs to 379 residues: tRNA-specific 2-thiouridylase MnmA (379 aa).

ATP-binding positions include 23 to 30 (AMSGGVDS) and Leu49. Cys117 (nucleophile) is an active-site residue. An intrachain disulfide couples Cys117 to Cys214. Gly141 is a binding site for ATP. The interval 163–165 (RDQ) is interaction with tRNA. Cys214 acts as the Cysteine persulfide intermediate in catalysis.

The protein belongs to the MnmA/TRMU family.

The protein localises to the cytoplasm. It carries out the reaction S-sulfanyl-L-cysteinyl-[protein] + uridine(34) in tRNA + AH2 + ATP = 2-thiouridine(34) in tRNA + L-cysteinyl-[protein] + A + AMP + diphosphate + H(+). Catalyzes the 2-thiolation of uridine at the wobble position (U34) of tRNA, leading to the formation of s(2)U34. The chain is tRNA-specific 2-thiouridylase MnmA from Cereibacter sphaeroides (strain ATCC 17029 / ATH 2.4.9) (Rhodobacter sphaeroides).